We begin with the raw amino-acid sequence, 232 residues long: Putative quercetin 2,3-dioxygenase PA1210 (232 aa).

H57, H59, H101, and E103 together coordinate a divalent metal cation.

It belongs to the pirin family. A divalent metal cation serves as cofactor.

It catalyses the reaction quercetin + O2 = 2-(3,4-dihydroxybenzoyloxy)-4,6-dihydroxybenzoate + CO. It participates in flavonoid metabolism; quercetin degradation. In terms of biological role, putative quercetin 2,3-dioxygenase. The polypeptide is Putative quercetin 2,3-dioxygenase PA1210 (Pseudomonas aeruginosa (strain ATCC 15692 / DSM 22644 / CIP 104116 / JCM 14847 / LMG 12228 / 1C / PRS 101 / PAO1)).